Here is a 593-residue protein sequence, read N- to C-terminus: 2-succinyl-5-enolpyruvyl-6-hydroxy-3-cyclohexene-1-carboxylate synthase (593 aa).

This sequence belongs to the TPP enzyme family. MenD subfamily. In terms of assembly, homodimer. The cofactor is Mg(2+). Mn(2+) serves as cofactor. Thiamine diphosphate is required as a cofactor.

The catalysed reaction is isochorismate + 2-oxoglutarate + H(+) = 5-enolpyruvoyl-6-hydroxy-2-succinyl-cyclohex-3-ene-1-carboxylate + CO2. Its pathway is quinol/quinone metabolism; 1,4-dihydroxy-2-naphthoate biosynthesis; 1,4-dihydroxy-2-naphthoate from chorismate: step 2/7. It functions in the pathway quinol/quinone metabolism; menaquinone biosynthesis. Catalyzes the thiamine diphosphate-dependent decarboxylation of 2-oxoglutarate and the subsequent addition of the resulting succinic semialdehyde-thiamine pyrophosphate anion to isochorismate to yield 2-succinyl-5-enolpyruvyl-6-hydroxy-3-cyclohexene-1-carboxylate (SEPHCHC). In Pelodictyon phaeoclathratiforme (strain DSM 5477 / BU-1), this protein is 2-succinyl-5-enolpyruvyl-6-hydroxy-3-cyclohexene-1-carboxylate synthase.